Reading from the N-terminus, the 275-residue chain is MNALTPLSARLERSDGHALVTLARSRGAVRLRDLAQRGSAKAFLPRVEGDVPEVVFLNTSGGLTGGDRLSYRLEVGEGCRATATTQTAERAYAAGAGAARVEVLHEVGRDGWLDWLPQETILFEGAALERETQISLAPGAGCLMVESVVLGRAAMGETLSRLAFRDRRSILRGGKPVVVEPLALDDRALAAAGGAAMLGGARALATLAMVGPGAEDALGPARAALGEAGVEAAASAFDGKLVLRLLAADGWPLRRQVARLLTVLRGRALPRVWQV.

It belongs to the UreD family. In terms of assembly, ureD, UreF and UreG form a complex that acts as a GTP-hydrolysis-dependent molecular chaperone, activating the urease apoprotein by helping to assemble the nickel containing metallocenter of UreC. The UreE protein probably delivers the nickel.

It localises to the cytoplasm. Required for maturation of urease via the functional incorporation of the urease nickel metallocenter. The chain is Urease accessory protein UreD from Cereibacter sphaeroides (strain ATCC 17023 / DSM 158 / JCM 6121 / CCUG 31486 / LMG 2827 / NBRC 12203 / NCIMB 8253 / ATH 2.4.1.) (Rhodobacter sphaeroides).